A 249-amino-acid chain; its full sequence is Anti-H(O) lectin 2 (249 aa).

Asparagine 118 is a glycosylation site (N-linked (GlcNAc...) asparagine). Residues glutamate 130 and aspartate 132 each contribute to the Mn(2+) site. Aspartate 132, tyrosine 134, asparagine 140, and aspartate 145 together coordinate Ca(2+). Residues aspartate 145 and histidine 148 each coordinate Mn(2+). A glycan (N-linked (GlcNAc...) asparagine) is linked at asparagine 245.

It belongs to the leguminous lectin family.

Di-N-acetylchitobiose specific lectin. This Ulex europaeus (Furze) protein is Anti-H(O) lectin 2.